A 501-amino-acid chain; its full sequence is Cytochrome P450 monooxygenase esdpH (501 aa).

The helical transmembrane segment at 5-22 (RVGILIIGVLATATFWLC) threads the bilayer. Residue C446 coordinates heme.

Belongs to the cytochrome P450 family. Requires heme as cofactor.

The protein localises to the membrane. The protein operates within secondary metabolite biosynthesis; terpenoid biosynthesis. Functionally, cytochrome P450 monooxygenase; part of the cluster that mediates the biosynthesis of shearones, diterpenoid pyrones (DPs) which are structurally diverse meroterpenoids consisting of a diterpene linked by a pyrone, and which may exhibit a range of bioactivities. Whitin the pathway, esdpH takes part in the molecular scaffold modification via the hydroxylation at C-6' and can transform shearone C into shearone E, shearone D into shearone F, and shearone H into shearone I, the latter being the final product of the pathway. The molecular scaffold is commonly biosynthesized by a series of enzymes including the non-reducing polyketide synthase (NR-PKS) esdpA that generates an alpha-pyrone; the prenyltransferase esdpC that attaches a geranylgeranyl pyrophosphate (GGPP) produced by the GGPP synthase (GGPPS) esdpD onto the pyrone unit; the FAD-dependent monooxygenase esdpE that converts an olefin on the diterpene unit into an epoxide; and the terpene cyclase esdpB that catalyzes the cyclization reactions to give the molecular backbone shearone A. In the modification steps, esdpF oxidizes the hydroxy group to a ketone at C-3 and esdpG then attaches hydroxy groups at both C-11 and C-12. After that, esdpI hydroxylates at C-20 and esdpH hydroxylates at C-6'. The ether bridge is generated by nucleophilic attack of the hydroxy group at C-20 to the carbonyl carbon at C-3. EsdpH can also functions prior to esdpI. The different combinations of these modification enzymes lead to the production of diverse shearone derivatives, shearone I being the end product of the pathway. The alpha-ketoglutarate-dependent dioxygenase esdpJ seems not to be involved in this pathway. The chain is Cytochrome P450 monooxygenase esdpH from Penicillium shearii (Eupenicillium shearii).